We begin with the raw amino-acid sequence, 440 residues long: Protein scalloped (440 aa).

A disordered region spans residues threonine 32–serine 65. A DNA-binding region (TEA) is located at residues serine 86–glutamate 162.

The C-terminus of sd interacts with the C-terminal serine-rich protein domain of vg, to form a complex which acts as a selector for wing development. Interacts (via C-terminus) with yki (via N-terminus) and this interaction enhances its transcriptional activity. Subset of neuroblasts in the central nervous system and in the peripheral sense organs of the embryo. Expressed in the developing wing primordia initially along the D/V wing boundary, and by the late third larval instar, maximal expression is seen in cells at the D/V wing disk boundary. Less expression in cells located farther from this boundary. Also expressed in wing progenitor cells.

The protein localises to the nucleus. Functionally, transcription factor which plays a key role in the Hippo/SWH (Sav/Wts/Hpo) signaling pathway, a signaling pathway that plays a pivotal role in organ size control and tumor suppression by restricting proliferation and promoting apoptosis. The core of this pathway is composed of a kinase cascade wherein Hippo (Hpo), in complex with its regulatory protein Salvador (Sav), phosphorylates and activates Warts (Wts) in complex with its regulatory protein Mats, which in turn phosphorylates and inactivates the Yorkie (Yki) oncoprotein. The Hippo/SWH signaling pathway inhibits the activity of the transcriptional complex formed by Scalloped (sd) and Yki and the target genes of this pathway include cyclin-E (cycE), diap1 and bantam. Sd promotes nuclear localization of Yki. Involved in the regulation of cell-specific gene expression during development, particularly in the differentiation of the nervous system. When in combination with vestigial (vg) it acts as a transcriptional activation complex that regulates gene expression in the wing. Binding to vg switches the DNA target selectivity of sd. Required autonomously for cell proliferation and viability within the wing blade. Required for proper sensory organ precursor (SOP) differentiation at the wing margin; required for correct expression of sens. This chain is Protein scalloped (sd), found in Drosophila melanogaster (Fruit fly).